We begin with the raw amino-acid sequence, 1153 residues long: Error-prone DNA polymerase (1153 aa).

A disordered region spans residues 1107-1153 (DELIAPSASTEREAPLNDDRRDHPDLPAQQIRHPRNVRILPPSRDFH). Residues 1116–1131 (TEREAPLNDDRRDHPD) are compositionally biased toward basic and acidic residues.

This sequence belongs to the DNA polymerase type-C family. DnaE2 subfamily.

The protein localises to the cytoplasm. It carries out the reaction DNA(n) + a 2'-deoxyribonucleoside 5'-triphosphate = DNA(n+1) + diphosphate. Its function is as follows. DNA polymerase involved in damage-induced mutagenesis and translesion synthesis (TLS). It is not the major replicative DNA polymerase. The polypeptide is Error-prone DNA polymerase (Rhodopseudomonas palustris (strain BisA53)).